Here is a 387-residue protein sequence, read N- to C-terminus: Flap endonuclease 1 (387 aa).

The tract at residues 1 to 104 (MGILGLSKLI…GELAKRAERR (104 aa)) is N-domain. Asp34 contributes to the Mg(2+) binding site. The DNA site is built by Arg47 and Arg70. Mg(2+) contacts are provided by Asp86, Glu158, Glu160, Asp179, and Asp181. An I-domain region spans residues 122-253 (GIEKFNRRLV…KRAIELINNY (132 aa)). Position 158 (Glu158) interacts with DNA. DNA contacts are provided by Gly231 and Asp233. A Mg(2+)-binding site is contributed by Asp233. The interval 336–344 (TQVRLDSFF) is interaction with PCNA. Residues 346 to 387 (TLPSTPNATNAAKRKAEEAKKSANNKKAKTSGGVGGRGRRPK) form a disordered region.

This sequence belongs to the XPG/RAD2 endonuclease family. FEN1 subfamily. As to quaternary structure, interacts with PCNA. Three molecules of FEN1 bind to one PCNA trimer with each molecule binding to one PCNA monomer. PCNA stimulates the nuclease activity without altering cleavage specificity. Requires Mg(2+) as cofactor. In terms of processing, phosphorylated. Phosphorylation upon DNA damage induces relocalization to the nuclear plasma.

Its subcellular location is the nucleus. The protein localises to the nucleolus. The protein resides in the nucleoplasm. It localises to the mitochondrion. Its function is as follows. Structure-specific nuclease with 5'-flap endonuclease and 5'-3' exonuclease activities involved in DNA replication and repair. During DNA replication, cleaves the 5'-overhanging flap structure that is generated by displacement synthesis when DNA polymerase encounters the 5'-end of a downstream Okazaki fragment. It enters the flap from the 5'-end and then tracks to cleave the flap base, leaving a nick for ligation. Also involved in the long patch base excision repair (LP-BER) pathway, by cleaving within the apurinic/apyrimidinic (AP) site-terminated flap. Acts as a genome stabilization factor that prevents flaps from equilibrating into structures that lead to duplications and deletions. Also possesses 5'-3' exonuclease activity on nicked or gapped double-stranded DNA, and exhibits RNase H activity. Also involved in replication and repair of rDNA and in repairing mitochondrial DNA. The chain is Flap endonuclease 1 from Drosophila erecta (Fruit fly).